Reading from the N-terminus, the 180-residue chain is Small ribosomal subunit protein uS4 (180 aa).

Residues 102 to 174 enclose the S4 RNA-binding domain; that stretch reads RRLQTMLVRK…PARKLEQKEE (73 aa). A disordered region spans residues 154 to 180; that stretch reads VPFSPLANPEHPARKLEQKEETNEESA. Basic and acidic residues predominate over residues 164–174; that stretch reads HPARKLEQKEE.

Belongs to the universal ribosomal protein uS4 family. Part of the 30S ribosomal subunit. Contacts protein S5. The interaction surface between S4 and S5 is involved in control of translational fidelity.

Its function is as follows. One of the primary rRNA binding proteins, it binds directly to 16S rRNA where it nucleates assembly of the body of the 30S subunit. In terms of biological role, with S5 and S12 plays an important role in translational accuracy. The polypeptide is Small ribosomal subunit protein uS4 (Nanoarchaeum equitans (strain Kin4-M)).